Consider the following 169-residue polypeptide: MRVSVFAVGRMKSGPKRELVERYFDRFAKAGPPLGLEFAGVSEIPESRGQTAQLRKAEEAQRIHEALDNAKSGGTSSGGAALILLDERGKALGSEAFAAIVGRMRDDGKRQLIVAIGGPDGHDPALRSRADLVLALGELTWPHQIARILIAEQLYRAATILAGHPYHRS.

Residues L85, G117, and 136-141 (LGELTW) each bind S-adenosyl-L-methionine.

This sequence belongs to the RNA methyltransferase RlmH family. In terms of assembly, homodimer.

It is found in the cytoplasm. It carries out the reaction pseudouridine(1915) in 23S rRNA + S-adenosyl-L-methionine = N(3)-methylpseudouridine(1915) in 23S rRNA + S-adenosyl-L-homocysteine + H(+). Specifically methylates the pseudouridine at position 1915 (m3Psi1915) in 23S rRNA. The sequence is that of Ribosomal RNA large subunit methyltransferase H from Brucella ovis (strain ATCC 25840 / 63/290 / NCTC 10512).